A 333-amino-acid polypeptide reads, in one-letter code: Protein pelota homolog (333 aa).

Belongs to the eukaryotic release factor 1 family. Pelota subfamily. As to quaternary structure, monomer. The cofactor is a divalent metal cation.

The protein resides in the cytoplasm. Its function is as follows. May function in recognizing stalled ribosomes, interact with stem-loop structures in stalled mRNA molecules, and effect endonucleolytic cleavage of the mRNA. May play a role in the release non-functional ribosomes and degradation of damaged mRNAs. Has endoribonuclease activity. This chain is Protein pelota homolog, found in Pyrobaculum arsenaticum (strain DSM 13514 / JCM 11321 / PZ6).